A 48-amino-acid chain; its full sequence is uncharacterized protein (48 aa).

This is an uncharacterized protein from Escherichia coli (Bacteriophage HK022).